The primary structure comprises 361 residues: Pyruvate dehydrogenase E1 component subunit beta, mitochondrial (361 aa).

The N-terminal 27 residues, 1-27 (MAVNGCMRLLRNGLTSACALEQSVRRL), are a transit peptide targeting the mitochondrion. Glu90 contributes to the thiamine diphosphate binding site. K(+) is bound by residues Ile143, Ala191, Val192, Asp194, and Asn196.

Heterotetramer of two PDHA1 and two PDHB subunits. The heterotetramer interacts with DLAT, and is part of the multimeric pyruvate dehydrogenase complex that contains multiple copies of pyruvate dehydrogenase (E1), dihydrolipoamide acetyltransferase (DLAT, E2) and lipoamide dehydrogenase (DLD, E3). The cofactor is thiamine diphosphate.

It is found in the mitochondrion matrix. The catalysed reaction is N(6)-[(R)-lipoyl]-L-lysyl-[protein] + pyruvate + H(+) = N(6)-[(R)-S(8)-acetyldihydrolipoyl]-L-lysyl-[protein] + CO2. In terms of biological role, the pyruvate dehydrogenase complex catalyzes the overall conversion of pyruvate to acetyl-CoA and CO(2), and thereby links the glycolytic pathway to the tricarboxylic cycle. This is Pyruvate dehydrogenase E1 component subunit beta, mitochondrial from Ascaris suum (Pig roundworm).